Consider the following 133-residue polypeptide: MAKKANPKAKTQKKRKVVVESNGEAHVTASFNNIIISLTNKKGDVVAWSSAGKMGFRGSKKNTPYAAQLAAEDASKVAHEAGMRKVKVYVKGPGNGRESAIRAVHNSGIEVTEIIDITPLPHNGCRPPKRRRV.

Belongs to the universal ribosomal protein uS11 family. Part of the 30S ribosomal subunit. Interacts with proteins S7 and S18. Binds to IF-3.

Its function is as follows. Located on the platform of the 30S subunit, it bridges several disparate RNA helices of the 16S rRNA. Forms part of the Shine-Dalgarno cleft in the 70S ribosome. The chain is Small ribosomal subunit protein uS11 from Christiangramia forsetii (strain DSM 17595 / CGMCC 1.15422 / KT0803) (Gramella forsetii).